A 335-amino-acid polypeptide reads, in one-letter code: Ketol-acid reductoisomerase (NADP(+)) 2 (335 aa).

The 180-residue stretch at 1–180 folds into the KARI N-terminal Rossmann domain; the sequence is MKTYYEQDAN…GCTRAGVIET (180 aa). NADP(+) contacts are provided by residues 24 to 27, Arg-47, Ser-51, and 81 to 84; these read YGSQ and DEQQ. The active site involves His-106. Gly-132 is a binding site for NADP(+). In terms of domain architecture, KARI C-terminal knotted spans 181–326; that stretch reads TFQEETETDL…EELREMMSWI (146 aa). Mg(2+) is bound by residues Asp-189, Glu-193, Glu-225, and Glu-229. Substrate is bound at residue Ser-250.

It belongs to the ketol-acid reductoisomerase family. Requires Mg(2+) as cofactor.

It carries out the reaction (2R)-2,3-dihydroxy-3-methylbutanoate + NADP(+) = (2S)-2-acetolactate + NADPH + H(+). The enzyme catalyses (2R,3R)-2,3-dihydroxy-3-methylpentanoate + NADP(+) = (S)-2-ethyl-2-hydroxy-3-oxobutanoate + NADPH + H(+). It participates in amino-acid biosynthesis; L-isoleucine biosynthesis; L-isoleucine from 2-oxobutanoate: step 2/4. The protein operates within amino-acid biosynthesis; L-valine biosynthesis; L-valine from pyruvate: step 2/4. In terms of biological role, involved in the biosynthesis of branched-chain amino acids (BCAA). Catalyzes an alkyl-migration followed by a ketol-acid reduction of (S)-2-acetolactate (S2AL) to yield (R)-2,3-dihydroxy-isovalerate. In the isomerase reaction, S2AL is rearranged via a Mg-dependent methyl migration to produce 3-hydroxy-3-methyl-2-ketobutyrate (HMKB). In the reductase reaction, this 2-ketoacid undergoes a metal-dependent reduction by NADPH to yield (R)-2,3-dihydroxy-isovalerate. The protein is Ketol-acid reductoisomerase (NADP(+)) 2 of Bacillus thuringiensis subsp. konkukian (strain 97-27).